The primary structure comprises 33 residues: Brevinin 2AV (33 aa).

Cys27 and Cys33 are disulfide-bonded.

In terms of tissue distribution, expressed by the skin glands.

The protein localises to the secreted. Its function is as follows. Has antibacterial activity. This Rana arvalis (Moor frog) protein is Brevinin 2AV.